Reading from the N-terminus, the 465-residue chain is Ribulose bisphosphate carboxylase large chain (465 aa).

N6,N6,N6-trimethyllysine is present on Lys-4. Substrate-binding residues include Asn-113 and Thr-163. Lys-165 acts as the Proton acceptor in catalysis. Lys-167 is a substrate binding site. Positions 191, 193, and 194 each coordinate Mg(2+). Residue Lys-191 is modified to N6-carboxylysine. Catalysis depends on His-284, which acts as the Proton acceptor. Substrate-binding residues include Arg-285, His-317, and Ser-369.

The protein belongs to the RuBisCO large chain family. Type I subfamily. Heterohexadecamer of 8 large chains and 8 small chains; disulfide-linked. The disulfide link is formed within the large subunit homodimers. Mg(2+) is required as a cofactor. Post-translationally, the disulfide bond which can form in the large chain dimeric partners within the hexadecamer appears to be associated with oxidative stress and protein turnover.

The protein localises to the plastid. Its subcellular location is the chloroplast. The catalysed reaction is 2 (2R)-3-phosphoglycerate + 2 H(+) = D-ribulose 1,5-bisphosphate + CO2 + H2O. It carries out the reaction D-ribulose 1,5-bisphosphate + O2 = 2-phosphoglycolate + (2R)-3-phosphoglycerate + 2 H(+). Its function is as follows. RuBisCO catalyzes two reactions: the carboxylation of D-ribulose 1,5-bisphosphate, the primary event in carbon dioxide fixation, as well as the oxidative fragmentation of the pentose substrate in the photorespiration process. Both reactions occur simultaneously and in competition at the same active site. The polypeptide is Ribulose bisphosphate carboxylase large chain (Bursera inaguensis (Elaphrium inaguense)).